The chain runs to 100 residues: Small ribosomal subunit protein uS14c (100 aa).

This sequence belongs to the universal ribosomal protein uS14 family. In terms of assembly, part of the 30S ribosomal subunit.

It is found in the plastid. Its subcellular location is the chloroplast. Binds 16S rRNA, required for the assembly of 30S particles. In Oltmannsiellopsis viridis (Marine flagellate), this protein is Small ribosomal subunit protein uS14c.